Reading from the N-terminus, the 346-residue chain is Putative aquaporin-7B (346 aa).

The Cytoplasmic segment spans residues 1 to 40; it reads MVQASGHRRSTRGSKMVSWSVIAKIQEIWCEEDERKMVRE. Residues 41 to 58 form a helical membrane-spanning segment; the sequence is FLAEFMSTYVMMVFGLGS. The Extracellular segment spans residues 59–71; the sequence is VAHMVLNKTYGSY. Residues 72-89 form a helical membrane-spanning segment; the sequence is LGVNLGFGFGVTMGVHVA. Residues 90–93 lie on the Cytoplasmic side of the membrane; that stretch reads GRIS. An intramembrane region (discontinuously helical) is located at residues 94 to 107; that stretch reads GAHMNAAVTFTNCA. An NPA 1 motif is present at residues 98-100; that stretch reads NAA. Residues 108-115 lie on the Cytoplasmic side of the membrane; sequence LGRVPWRK. Residues 116–136 form a helical membrane-spanning segment; sequence FPVHVLGQFLGSFLAAATIYS. Residues 137-174 lie on the Extracellular side of the membrane; it reads LFYTAILHFSGGELMVTGPFATAGIFATYLPDHMTLWR. Residues 175–192 traverse the membrane as a helical segment; sequence GFLNEEWLTRMLQLCLFT. The Cytoplasmic portion of the chain corresponds to 193-204; the sequence is ITDQENNPALPG. Residues 205–221 form a helical membrane-spanning segment; it reads THALVISILVVIIRVSH. Topologically, residues 222 to 225 are extracellular; it reads GINT. The discontinuously helical intramembrane region spans 226 to 239; it reads GYAINPSRDPPPSI. Residues 230–232 carry the NPA 2 motif; that stretch reads NPS. At 240–257 the chain is on the extracellular side; that stretch reads FTFIAGWGKQVFSDGENW. Residues 258 to 279 form a helical membrane-spanning segment; sequence WWVPVVAPLLGASLGGIIYLVF. The Cytoplasmic segment spans residues 280–346; sequence IGSTIPREPL…LHESMALEHF (67 aa).

Belongs to the MIP/aquaporin (TC 1.A.8) family. In terms of assembly, homotetramer; each monomer provides an independent glycerol/water pore.

It is found in the membrane. It catalyses the reaction glycerol(in) = glycerol(out). It carries out the reaction H2O(in) = H2O(out). Aquaglyceroporins form homotetrameric transmembrane channels, with each monomer independently mediating glycerol and water transport across the plasma membrane along their osmotic gradient. This Homo sapiens (Human) protein is Putative aquaporin-7B.